The following is a 151-amino-acid chain: Caveolin-3 (151 aa).

Over 1 to 83 (MMAEERTDLE…RLLSTLLGVP (83 aa)) the chain is Cytoplasmic. K38 participates in a covalent cross-link: Glycyl lysine isopeptide (Lys-Gly) (interchain with G-Cter in SUMO3). The tract at residues 64 to 114 (TFTVSKYWCYRLLSTLLGVPLALLWGFLFACISFCHIWAVVPCIKSYLIEI) is required for interaction with DAG1. Residues 84-104 (LALLWGFLFACISFCHIWAVV) constitute an intramembrane region (helical). The Cytoplasmic segment spans residues 105–151 (PCIKSYLIEIQCISHIYSLCIRTFCNPVFAALGQVCSNIKVMLRKEV).

Belongs to the caveolin family. In terms of assembly, homooligomer. Interacts with DYSF. Interacts with DLG1 and KCNA5; forms a ternary complex. Interacts with DAG1 (via its C-terminal); the interaction prevents binding of DAG1 with DMD. Interacts with TRIM72. Interacts with MUSK; may regulate MUSK signaling. Interacts with POPDC1. Interacts with CAVIN1, CAVIN2 and CAVIN4. In terms of processing, sumoylation with SUMO3 by PIAS4 may reduce agonist-induced internalization and desensitization of adrenergic receptor ABRD2. As to expression, expressed specifically in skeletal muscle and heart.

The protein resides in the golgi apparatus membrane. The protein localises to the cell membrane. Its subcellular location is the membrane. It is found in the caveola. It localises to the sarcolemma. Its function is as follows. May act as a scaffolding protein within caveolar membranes. Interacts directly with G-protein alpha subunits and can functionally regulate their activity. May also regulate voltage-gated potassium channels. Plays a role in the sarcolemma repair mechanism of both skeletal muscle and cardiomyocytes that permits rapid resealing of membranes disrupted by mechanical stress. Mediates the recruitment of CAVIN2 and CAVIN3 proteins to the caveolae. The polypeptide is Caveolin-3 (CAV3) (Sus scrofa (Pig)).